Consider the following 110-residue polypeptide: Ribonuclease P protein component 1 (110 aa).

Belongs to the eukaryotic/archaeal RNase P protein component 1 family. Consists of a catalytic RNA component and at least 4-5 protein subunits.

The protein localises to the cytoplasm. The catalysed reaction is Endonucleolytic cleavage of RNA, removing 5'-extranucleotides from tRNA precursor.. Its function is as follows. Part of ribonuclease P, a protein complex that generates mature tRNA molecules by cleaving their 5'-ends. The polypeptide is Ribonuclease P protein component 1 (Methanosarcina mazei (strain ATCC BAA-159 / DSM 3647 / Goe1 / Go1 / JCM 11833 / OCM 88) (Methanosarcina frisia)).